The primary structure comprises 319 residues: Ribonuclease Z (319 aa).

Residues His62, His64, Asp66, His67, His139, Asp210, and His268 each contribute to the Zn(2+) site. The active-site Proton acceptor is the Asp66.

It belongs to the RNase Z family. In terms of assembly, homodimer. The cofactor is Zn(2+).

It catalyses the reaction Endonucleolytic cleavage of RNA, removing extra 3' nucleotides from tRNA precursor, generating 3' termini of tRNAs. A 3'-hydroxy group is left at the tRNA terminus and a 5'-phosphoryl group is left at the trailer molecule.. Zinc phosphodiesterase, which displays some tRNA 3'-processing endonuclease activity. Probably involved in tRNA maturation, by removing a 3'-trailer from precursor tRNA. The protein is Ribonuclease Z of Nostoc punctiforme (strain ATCC 29133 / PCC 73102).